The following is a 2684-amino-acid chain: Teneurin-1 (2684 aa).

Disordered stretches follow at residues M1–T37, T127–S156, and G170–D204. The Cytoplasmic portion of the chain corresponds to M1 to K216. Over residues G11 to G24 the composition is skewed to pro residues. Low complexity predominate over residues T127–S136. The helical transmembrane segment at W217–F237 threads the bilayer. Topologically, residues R238 to E2684 are extracellular. 2 consecutive EGF-like domains span residues T463–E499 and R501–E534. 6 disulfide bridges follow: C467–C476, C472–C487, C489–C498, C505–C516, C510–C522, and C524–C533. Residues P576 to L614 form a disordered region. 2 stretches are compositionally biased toward basic and acidic residues: residues R584–K593 and S605–L614. EGF-like domains follow at residues D650–T684 and A716–S753. Intrachain disulfides connect C654–C666, C659–C672, C674–C683, C720–C730, C724–C741, and C743–C752. 4 NHL repeats span residues D1276–T1317, R1334–D1378, S1398–L1441, and A1470–R1513.

Belongs to the tenascin family. Teneurin subfamily. In terms of processing, probably proteolytically processed to generate a N-terminal intracellular domain. As to expression, isoform 1 is mainly expressed in organs derived from the mesoderm, including the pharynx, vulva muscles, gonad distal tip cells, intestine and several tail neurons. Isoform 2 is mainly expressed in the organs derived from the ectoderm, including hypodermal cells, head ganglion neurons and tail neurons (at protein level).

The protein localises to the nucleus. It localises to the cell membrane. Its subcellular location is the membrane. In terms of biological role, plays a role in the gonadal basement membrane maintenance and/or adhesion early in development. Contributes to the guidance of pharyngeal neurons. The chain is Teneurin-1 (ten-1) from Caenorhabditis elegans.